The primary structure comprises 140 residues: Oocyte-expressed protein homolog (140 aa).

Residues 40–101 (PLVFFLEAWL…AVQRQVKSVL (62 aa)) form the KH; atypical domain.

Belongs to the KHDC1 family. Component of the subcortical maternal complex (SCMC), at least composed of NLRP5, KHDC3, OOEP, and TLE6. Within the complex, interacts with NLRP5, KHDC3 and TLE6. As part of the SCMC interacts with the SCMC-associated protein NLRP4F. The SCMC may facilitate translocation of its components between the nuclear and cytoplasmic compartments. Forms a scaffold complex with KHDC3/FILIA, and interacts with BLM and TRIM25 at DNA replication forks.

It is found in the cytoplasm. The protein resides in the nucleus. In terms of biological role, component of the subcortical maternal complex (SCMC), a multiprotein complex that plays a key role in early embryonic development. The SCMC complex is a structural constituent of cytoplasmic lattices, which consist in fibrous structures found in the cytoplasm of oocytes and preimplantation embryos. They are required to store maternal proteins critical for embryonic development, such as proteins that control epigenetic reprogramming of the preimplantation embryo, and prevent their degradation or activation. As part of the OOEP-KHDC3 scaffold, recruits BLM and TRIM25 to DNA replication forks, thereby promoting the ubiquitination of BLM by TRIM25, enhancing BLM retainment at replication forks and therefore promoting stalled replication fork restart. Positively regulates the homologous recombination-mediated DNA double-strand break (DSB) repair pathway by regulating ATM activation and RAD51 recruitment to DSBs in oocytes. Thereby contributes to oocyte survival and the resumption and completion of meiosis. The polypeptide is Oocyte-expressed protein homolog (OOEP) (Bos taurus (Bovine)).